We begin with the raw amino-acid sequence, 366 residues long: GTPase Obg (366 aa).

The Obg domain maps to 1 to 161; sequence MRFVDEARIQ…FNLRLELKIL (161 aa). The disordered stretch occupies residues 121–148; that stretch reads SGGRGGKGNEHFKSSTMRAPRFSQPGEP. Residues 162-334 form the OBG-type G domain; sequence ADAGLIGLPN…LVQELWQVCE (173 aa). Residues 168–175, 193–197, 217–220, 287–290, and 315–317 each bind GTP; these read GLPNAGKS, FTTLT, DIPG, NKID, and SAR. Positions 175 and 195 each coordinate Mg(2+).

Belongs to the TRAFAC class OBG-HflX-like GTPase superfamily. OBG GTPase family. In terms of assembly, monomer. It depends on Mg(2+) as a cofactor.

It is found in the cytoplasm. Its function is as follows. An essential GTPase which binds GTP, GDP and possibly (p)ppGpp with moderate affinity, with high nucleotide exchange rates and a fairly low GTP hydrolysis rate. Plays a role in control of the cell cycle, stress response, ribosome biogenesis and in those bacteria that undergo differentiation, in morphogenesis control. The sequence is that of GTPase Obg from Desulfovibrio desulfuricans (strain ATCC 27774 / DSM 6949 / MB).